The following is a 711-amino-acid chain: MSLSTGSTGSERSNQSLIKGALDLDPWLEPFSGQLIHRQLNLRKWYDEFKQNEGSLTNFASAYEKYGLHANWDTKEVFINEYIPNVVEVSLVGDFNNWDTNTHKLKPVNDFGLWSLTIKPTENNEFAVPHDSRYKISMVTASGERIYRLCPWLKRATPSTENNLYEGRFWNPQPTETYKFKHERPRLESKDGIKIYEAHVGISTPEPKVGSYKNFTTKVLPVIHKLGYNTIQLMAVMEHAYYASFGYQVTNFFAISSRFGTPEDLKELIDEAHRLGIRVLLDVVHSHSSKNVEDGLNMFNGTDHYLFHGGTKGSHELWDSRLFNYSNYETLRFLLSNLRFYIDVFKFDGFRFDGVTSMLYKHHGLSFGFSGDYNEYFNSEWVDNDAITYLMLGHKLLDEISVRENNYKFVSIAEDVSGMPTLCLPIGQGGIGFDYRLSMAIPDMWIKIIKHLSDEEWDMGSLVHTLTNRRHGERCISYCESHDQALVGDKTIAFWLMDKEMYTNMSTLTPFTPVIDRGIALHKMIRLITFSLGGEGYLNFEGNEFGHPEWLDFPRKGNGESYAYARRQFNLIEDDLLRYKFLFAFDGAMQHLDTKYGILLSSQAYVSLKNENDKVIVFERNGLLFIFNFHPTNSYADYKIGVETPGVYQIVLNSDSLSFGGHGRIEETNKETGEKLQFFTNNERWNDRSNALFCYIPSRTAIVLQVKEKVV.

Positions 98 and 135 each coordinate (1,4-alpha-D-glucosyl)n. Asp353 serves as the catalytic Nucleophile. The active-site Proton donor is Glu414.

The protein belongs to the glycosyl hydrolase 13 family. GlgB subfamily.

It is found in the cytoplasm. It carries out the reaction Transfers a segment of a (1-&gt;4)-alpha-D-glucan chain to a primary hydroxy group in a similar glucan chain.. It participates in glycan biosynthesis; glycogen biosynthesis. In terms of biological role, glycogen-branching enzyme participates in the glycogen biosynthetic process along with glycogenin and glycogen synthase. Generates alpha-1,6-glucosidic branches from alpha-1,4-linked glucose chains, to increase solubility of the glycogen polymer. This chain is 1,4-alpha-glucan-branching enzyme (GLC3), found in Debaryomyces hansenii (strain ATCC 36239 / CBS 767 / BCRC 21394 / JCM 1990 / NBRC 0083 / IGC 2968) (Yeast).